We begin with the raw amino-acid sequence, 925 residues long: Neuropilin-2 (925 aa).

The signal sequence occupies residues 1-22 (MDMFPLTWIFLALYFSGHKVRS). Topologically, residues 23–858 (QQDPPCGGRL…EKSWLYTLDP (836 aa)) are extracellular. Intrachain disulfides connect Cys28/Cys55, Cys83/Cys105, and Cys149/Cys175. CUB domains are found at residues 28 to 142 (CGGR…YEIF) and 149 to 267 (CSKN…YYLV). Residues Asn152 and Asn157 are each glycosylated (N-linked (GlcNAc...) asparagine). Ca(2+) contacts are provided by Glu197, Asp211, and Asp252. Cys208 and Cys230 are disulfide-bonded. 2 disulfide bridges follow: Cys277–Cys427 and Cys434–Cys592. F5/8 type C domains are found at residues 277–427 (CNAP…LFGC) and 434–592 (CSNM…VLGC). Residues 297–310 (STFSDGRWTPQQSR) show a composition bias toward polar residues. Residues 297 to 317 (STFSDGRWTPQQSRLHGDDNG) form a disordered region. The segment at 601-621 (VETLGPTVKSEETTTPYPMDE) is disordered. The N-linked (GlcNAc...) asparagine glycan is linked to Asn629. The 161-residue stretch at 642 to 802 (SGFNCNFDFP…TDVPLENCME (161 aa)) folds into the MAM domain. Residues 820–830 (YEDEIDDDYEG) are compositionally biased toward acidic residues. The segment at 820-849 (YEDEIDDDYEGDWNNSSSTSGAGSPSSGKE) is disordered. Asn833 and Asn834 each carry an N-linked (GlcNAc...) asparagine glycan. The span at 835–846 (SSSTSGAGSPSS) shows a compositional bias: low complexity. Residues 859 to 883 (ILITIIAMSSLGVLLGATCAGLLLY) traverse the membrane as a helical segment. Over 884 to 925 (CTCSYSGLSSRSCTTLENYNFELYDGLKHKVKINHQKCCSEA) the chain is Cytoplasmic.

This sequence belongs to the neuropilin family. Heterodimer with NRP1. Binds PLXNB1. In terms of tissue distribution, found in certain neuronal populations of the CNS, including dorsal root ganglia, and in other non-neuronal tissues including mesenchymal tissue lining in the ribs.

The protein resides in the membrane. Its function is as follows. High affinity receptor for semaphorins 3C, 3F, VEGF-165 and VEGF-145 isoforms of VEGF, and the PLGF-2 isoform of PGF. This chain is Neuropilin-2 (Nrp2), found in Rattus norvegicus (Rat).